We begin with the raw amino-acid sequence, 422 residues long: Adenylosuccinate synthetase (422 aa).

Residues 11–17 (GDEGKGK) and 39–41 (GHT) each bind GTP. Aspartate 12 acts as the Proton acceptor in catalysis. Residues aspartate 12 and glycine 39 each contribute to the Mg(2+) site. IMP contacts are provided by residues 12 to 15 (DEGK), 37 to 40 (NAGH), threonine 129, arginine 143, asparagine 219, threonine 234, and arginine 298. Catalysis depends on histidine 40, which acts as the Proton donor. 294 to 300 (VTTGRKR) provides a ligand contact to substrate. GTP-binding positions include arginine 300, 326 to 328 (KLD), and 411 to 413 (GTG).

It belongs to the adenylosuccinate synthetase family. In terms of assembly, homodimer. Mg(2+) is required as a cofactor.

Its subcellular location is the cytoplasm. It catalyses the reaction IMP + L-aspartate + GTP = N(6)-(1,2-dicarboxyethyl)-AMP + GDP + phosphate + 2 H(+). It participates in purine metabolism; AMP biosynthesis via de novo pathway; AMP from IMP: step 1/2. Its function is as follows. Plays an important role in the de novo pathway and in the salvage pathway of purine nucleotide biosynthesis. Catalyzes the first committed step in the biosynthesis of AMP from IMP. This chain is Adenylosuccinate synthetase, found in Talaromyces marneffei (strain ATCC 18224 / CBS 334.59 / QM 7333) (Penicillium marneffei).